The following is a 540-amino-acid chain: Chaperonin GroEL (540 aa).

Residues 29 to 32 (TLGP), 86 to 90 (DGTTT), G413, 476 to 478 (NAA), and D492 each bind ATP.

It belongs to the chaperonin (HSP60) family. In terms of assembly, forms a cylinder of 14 subunits composed of two heptameric rings stacked back-to-back. Interacts with the co-chaperonin GroES.

The protein localises to the cytoplasm. The enzyme catalyses ATP + H2O + a folded polypeptide = ADP + phosphate + an unfolded polypeptide.. Functionally, together with its co-chaperonin GroES, plays an essential role in assisting protein folding. The GroEL-GroES system forms a nano-cage that allows encapsulation of the non-native substrate proteins and provides a physical environment optimized to promote and accelerate protein folding. In Streptococcus agalactiae, this protein is Chaperonin GroEL.